Consider the following 353-residue polypeptide: S-adenosylmethionine:tRNA ribosyltransferase-isomerase (353 aa).

This sequence belongs to the QueA family. As to quaternary structure, monomer.

The protein resides in the cytoplasm. It carries out the reaction 7-aminomethyl-7-carbaguanosine(34) in tRNA + S-adenosyl-L-methionine = epoxyqueuosine(34) in tRNA + adenine + L-methionine + 2 H(+). The protein operates within tRNA modification; tRNA-queuosine biosynthesis. Functionally, transfers and isomerizes the ribose moiety from AdoMet to the 7-aminomethyl group of 7-deazaguanine (preQ1-tRNA) to give epoxyqueuosine (oQ-tRNA). This Sodalis glossinidius (strain morsitans) protein is S-adenosylmethionine:tRNA ribosyltransferase-isomerase.